Consider the following 391-residue polypeptide: cAMP-dependent protein kinase regulatory subunit (391 aa).

The interval 1 to 84 (MFKSPFGANA…PPNPESYPAQ (84 aa)) is disordered. The segment at 1–131 (MFKSPFGANA…RLKTAIAGNF (131 aa)) is dimerization and phosphorylation. Positions 38 to 55 (TVTSPTSPNFGMNAQSMF) are enriched in polar residues. Ser92 bears the Phosphoserine mark. 3',5'-cyclic AMP is bound by residues 132 to 261 (LFSH…FLRE), Glu210, Arg219, 264 to 381 (LLQT…DIKT), Glu331, and Arg340.

It belongs to the cAMP-dependent kinase regulatory chain family. In terms of assembly, tetramer, composed of 2 regulatory (R) and 2 catalytic (C) subunits. In the presence of cAMP it dissociates into 2 active monomeric C subunits and an R dimer.

This Colletotrichum orbiculare (strain 104-T / ATCC 96160 / CBS 514.97 / LARS 414 / MAFF 240422) (Cucumber anthracnose fungus) protein is cAMP-dependent protein kinase regulatory subunit (PKAR).